Reading from the N-terminus, the 479-residue chain is PTS system glucose-specific EIICB component (479 aa).

The PTS EIIC type-1 domain maps to M1–K388. 9 helical membrane-spanning segments follow: residues S15 to A35, A51 to F71, L80 to F100, Y112 to F132, F152 to W172, G252 to A272, I280 to I300, I305 to I325, and L356 to I376. Residues K399 to Q479 enclose the PTS EIIB type-1 domain. C421 (phosphocysteine intermediate; for EIIB activity) is an active-site residue. C421 carries the post-translational modification Phosphocysteine.

Its subcellular location is the cell inner membrane. It catalyses the reaction N(pros)-phospho-L-histidyl-[protein] + D-glucose(out) = D-glucose 6-phosphate(in) + L-histidyl-[protein]. Its function is as follows. The phosphoenolpyruvate-dependent sugar phosphotransferase system (sugar PTS), a major carbohydrate active transport system, catalyzes the phosphorylation of incoming sugar substrates concomitantly with their translocation across the cell membrane. The enzyme II complex composed of PtsG and Crr is involved in glucose transport. The chain is PTS system glucose-specific EIICB component (ptsG) from Buchnera aphidicola subsp. Baizongia pistaciae (strain Bp).